Consider the following 218-residue polypeptide: 23 kDa integral membrane protein (218 aa).

Residues 1 to 12 (MATLGTGMRCLK) lie on the Cytoplasmic side of the membrane. Residues 13 to 36 (SCVFILNIICLLCSLVLIGAGAYV) form a helical membrane-spanning segment. At 37–55 (EVKFSQYEANLHKVWQAAP) the chain is on the extracellular side. Residues 56-71 (IAIIVVGVVILIVSFL) traverse the membrane as a helical segment. Residues 72 to 82 (GCCGAIKENVC) lie on the Cytoplasmic side of the membrane. A helical membrane pass occupies residues 83–108 (MLYMYAFFLIVLLIAELVAAIVAVVY). Residues 109 to 183 (KDKIDDEINT…SVFSAFLKRN (75 aa)) lie on the Extracellular side of the membrane. Residues 184–205 (LIIVACVAFGVCFFQLLSIVIA) traverse the membrane as a helical segment. The Cytoplasmic segment spans residues 206–218 (CCLGQRIHDYQNV).

Belongs to the tetraspanin (TM4SF) family.

Its subcellular location is the membrane. This is 23 kDa integral membrane protein from Schistosoma japonicum (Blood fluke).